Consider the following 1235-residue polypeptide: Phosphorylase b kinase regulatory subunit alpha, liver isoform (1235 aa).

The disordered stretch occupies residues 636-655 (FSPDSEPDLGGYLEDSSPQE). Residues Ser695, Ser729, and Ser735 each carry the phosphoserine modification. The calmodulin-binding stretch occupies residues 807 to 837 (LSELYGKAGLNQEWSLIRYISGLLRKKVEVL). Phosphoserine occurs at positions 983, 1015, and 1044. The tract at residues 1033-1060 (SIKSVRSSTPSSPTGTSSTDSGGQHLGW) is disordered. Positions 1039–1055 (SSTPSSPTGTSSTDSGG) are enriched in low complexity. The calmodulin-binding stretch occupies residues 1059–1099 (GWGEQQGQWLRRRRLDGAINRVPVGFYQKVWKILQKCHGLS). Cys1232 carries the S-farnesyl cysteine lipid modification.

Belongs to the phosphorylase b kinase regulatory chain family. Hexadecamer of 4 heterotetramers, each composed of alpha, beta, gamma, and delta subunits. Alpha (PHKA1 or PHKA2) and beta (PHKB) are regulatory subunits, gamma (PHKG1 or PHKG2) is the catalytic subunit, and delta is calmodulin. Although the final Cys may be farnesylated, the terminal tripeptide is probably not removed, and the C-terminus is not methylated.

The protein resides in the cell membrane. Its pathway is glycan biosynthesis; glycogen metabolism. Its activity is regulated as follows. By phosphorylation of various serine residues and by calcium. Functionally, phosphorylase b kinase catalyzes the phosphorylation of serine in certain substrates, including troponin I. The alpha chain may bind calmodulin. The sequence is that of Phosphorylase b kinase regulatory subunit alpha, liver isoform (Phka2) from Mus musculus (Mouse).